The sequence spans 250 residues: Urease accessory protein UreD (250 aa).

This sequence belongs to the UreD family. In terms of assembly, ureD, UreF and UreG form a complex that acts as a GTP-hydrolysis-dependent molecular chaperone, activating the urease apoprotein by helping to assemble the nickel containing metallocenter of UreC. The UreE protein probably delivers the nickel.

It is found in the cytoplasm. In terms of biological role, required for maturation of urease via the functional incorporation of the urease nickel metallocenter. The protein is Urease accessory protein UreD of Aliarcobacter butzleri (strain RM4018) (Arcobacter butzleri).